The following is a 216-amino-acid chain: Orotate phosphoribosyltransferase (216 aa).

5-phospho-alpha-D-ribose 1-diphosphate is bound at residue K30. Position 38–39 (38–39 (FF)) interacts with orotate. 5-phospho-alpha-D-ribose 1-diphosphate-binding positions include 75-76 (YK), R102, K103, K106, H108, and 128-136 (DDVITAGTA). T132 and R160 together coordinate orotate.

Belongs to the purine/pyrimidine phosphoribosyltransferase family. PyrE subfamily. In terms of assembly, homodimer. Mg(2+) serves as cofactor.

The enzyme catalyses orotidine 5'-phosphate + diphosphate = orotate + 5-phospho-alpha-D-ribose 1-diphosphate. It functions in the pathway pyrimidine metabolism; UMP biosynthesis via de novo pathway; UMP from orotate: step 1/2. Catalyzes the transfer of a ribosyl phosphate group from 5-phosphoribose 1-diphosphate to orotate, leading to the formation of orotidine monophosphate (OMP). In Acinetobacter baumannii (strain ATCC 17978 / DSM 105126 / CIP 53.77 / LMG 1025 / NCDC KC755 / 5377), this protein is Orotate phosphoribosyltransferase.